A 329-amino-acid polypeptide reads, in one-letter code: Probable endo-beta-1,4-glucanase B (329 aa).

Residues 1–18 (MKFGSIVLIAAAAGSAVA) form the signal peptide. Asn33 and Asn96 each carry an N-linked (GlcNAc...) asparagine glycan. The active-site Proton donor is Glu156. Glu263 serves as the catalytic Nucleophile.

It belongs to the glycosyl hydrolase 5 (cellulase A) family.

The protein resides in the secreted. The enzyme catalyses Endohydrolysis of (1-&gt;4)-beta-D-glucosidic linkages in cellulose, lichenin and cereal beta-D-glucans.. In terms of biological role, has endoglucanase activity on substrates containing beta-1,4 glycosidic bonds, like in carboxymethylcellulose (CMC), hydroxyethylcellulose (HEC) and beta-glucan. Involved in the degradation of complex natural cellulosic substrates. The sequence is that of Probable endo-beta-1,4-glucanase B (eglB) from Neosartorya fischeri (strain ATCC 1020 / DSM 3700 / CBS 544.65 / FGSC A1164 / JCM 1740 / NRRL 181 / WB 181) (Aspergillus fischerianus).